A 401-amino-acid polypeptide reads, in one-letter code: Secreted LysM effector Blys8 (401 aa).

The first 19 residues, 1 to 19 (MRTLAIFFIGAAVAAHVSP), serve as a signal peptide directing secretion. Residues 42-89 (TYYDEAYDKSYTCDDLLSAWVISKQDFESWNPAVGSDCKLVLGHSYCV) form the LysM 1 domain. The span at 98-136 (STTTTTTTSTTTKTTTKTTTTTTAAPKPTSSAPSGPSPT) shows a compositional bias: low complexity. Positions 98–137 (STTTTTTTSTTTKTTTKTTTTTTAAPKPTSSAPSGPSPTQ) are disordered. Residues 146–193 (AYYFVKAGDTCDKISQMYGTFSTAQFIEWNPAVGSSCTGLWAGYYYCV) enclose the LysM 2 domain. The disordered stretch occupies residues 201 to 223 (SRTSTAGPTSTKPANGVTTPQPT). The LysM 3 domain occupies 233 to 279 (QFVYVQPGDQCGTVASRAGVSLSDFLQWNPSTGKDCSGLWANAYACV).

This sequence belongs to the secreted LysM effector family.

Functionally, might have a role in sequestration of chitin oligosaccharides (breakdown products of fungal cell walls that are released during invasion and act as triggers of host immunity) to dampen host defense. The chain is Secreted LysM effector Blys8 from Beauveria bassiana (strain ARSEF 2860) (White muscardine disease fungus).